The chain runs to 279 residues: MLIIELLKAIFFGIIEGITEWLPVSSTGHLILVQEFIRLNQDKAFIEMFNIVIQLGAIIAVMLIYFERLNPFQPGKTAREVQLTWQLWLKVVIACIPSILIAVPLDNWFEAHFYFMVPIAIALIVYGIAFIWIEKRNAQQEPAVTELVRMSYKTAFFIGCFQVLSIVPGTSRSGATILGAIILGTSRTVAADFTFFLAIPTMFGYSGLKAVKFFLDGHHLDFAQVLILLVASLTAFVVSLLAIRFLTDYVKKHDFTIFGKYRIVLGSLLLIYSFFKFVF.

A run of 8 helical transmembrane segments spans residues leucine 2–leucine 22, alanine 44–isoleucine 64, tryptophan 85–leucine 105, phenylalanine 113–isoleucine 133, valine 163–leucine 183, threonine 188–leucine 208, alanine 223–isoleucine 243, and phenylalanine 255–phenylalanine 275.

It belongs to the UppP family.

The protein resides in the cell membrane. It catalyses the reaction di-trans,octa-cis-undecaprenyl diphosphate + H2O = di-trans,octa-cis-undecaprenyl phosphate + phosphate + H(+). Its function is as follows. Catalyzes the dephosphorylation of undecaprenyl diphosphate (UPP). Confers resistance to bacitracin. In Streptococcus pyogenes serotype M5 (strain Manfredo), this protein is Undecaprenyl-diphosphatase.